We begin with the raw amino-acid sequence, 447 residues long: Bifunctional protein GlmU (447 aa).

The tract at residues Met-1–Arg-225 is pyrophosphorylase. Residues Leu-7–Gly-10, Lys-21, Gln-73, and Gly-78–Thr-79 each bind UDP-N-acetyl-alpha-D-glucosamine. A Mg(2+)-binding site is contributed by Asp-103. UDP-N-acetyl-alpha-D-glucosamine contacts are provided by Gly-140, Glu-154, Asn-169, and Asn-223. Asn-223 is a Mg(2+) binding site. Residues Val-226 to Gly-246 form a linker region. The segment at Gly-247 to Asn-447 is N-acetyltransferase. UDP-N-acetyl-alpha-D-glucosamine contacts are provided by Arg-328 and Lys-346. His-358 (proton acceptor) is an active-site residue. UDP-N-acetyl-alpha-D-glucosamine contacts are provided by Tyr-361 and Asn-372. Residues Ala-375, Ala-418, and Arg-435 each coordinate acetyl-CoA.

This sequence in the N-terminal section; belongs to the N-acetylglucosamine-1-phosphate uridyltransferase family. In the C-terminal section; belongs to the transferase hexapeptide repeat family. In terms of assembly, homotrimer. Requires Mg(2+) as cofactor.

It is found in the cytoplasm. It catalyses the reaction alpha-D-glucosamine 1-phosphate + acetyl-CoA = N-acetyl-alpha-D-glucosamine 1-phosphate + CoA + H(+). The enzyme catalyses N-acetyl-alpha-D-glucosamine 1-phosphate + UTP + H(+) = UDP-N-acetyl-alpha-D-glucosamine + diphosphate. Its pathway is nucleotide-sugar biosynthesis; UDP-N-acetyl-alpha-D-glucosamine biosynthesis; N-acetyl-alpha-D-glucosamine 1-phosphate from alpha-D-glucosamine 6-phosphate (route II): step 2/2. It participates in nucleotide-sugar biosynthesis; UDP-N-acetyl-alpha-D-glucosamine biosynthesis; UDP-N-acetyl-alpha-D-glucosamine from N-acetyl-alpha-D-glucosamine 1-phosphate: step 1/1. The protein operates within bacterial outer membrane biogenesis; LPS lipid A biosynthesis. Catalyzes the last two sequential reactions in the de novo biosynthetic pathway for UDP-N-acetylglucosamine (UDP-GlcNAc). The C-terminal domain catalyzes the transfer of acetyl group from acetyl coenzyme A to glucosamine-1-phosphate (GlcN-1-P) to produce N-acetylglucosamine-1-phosphate (GlcNAc-1-P), which is converted into UDP-GlcNAc by the transfer of uridine 5-monophosphate (from uridine 5-triphosphate), a reaction catalyzed by the N-terminal domain. The chain is Bifunctional protein GlmU from Prochlorococcus marinus (strain MIT 9515).